Reading from the N-terminus, the 198-residue chain is GTP-binding protein RHO1 (198 aa).

16–23 (GDGACGKT) lines the GTP pocket. An Effector region motif is present at residues 38–46 (YVPTVFENY). Residues 63 to 67 (DTAGQ) and 121 to 124 (CKSD) contribute to the GTP site. Residue cysteine 195 is modified to Cysteine methyl ester. Cysteine 195 carries the S-geranylgeranyl cysteine lipid modification. Residues 196–198 (VVL) constitute a propeptide, removed in mature form.

It belongs to the small GTPase superfamily. Rho family.

Its subcellular location is the cell membrane. The chain is GTP-binding protein RHO1 (RHO1) from Candida albicans (strain SC5314 / ATCC MYA-2876) (Yeast).